The chain runs to 686 residues: Aminodeoxychorismate synthase (686 aa).

In terms of domain architecture, Glutamine amidotransferase type-1 spans 2–194 (RTLLIDNYDS…RDLALAHHRA (193 aa)). The active-site Nucleophile is C81. Active-site residues include H168 and E170. Residues 233–686 (LDSSSVLEGA…LDGSAVAGAR (454 aa)) are PABB component.

The protein in the C-terminal section; belongs to the anthranilate synthase component I family.

The catalysed reaction is chorismate + L-glutamine = 4-amino-4-deoxychorismate + L-glutamate. It participates in antibiotic biosynthesis. Its function is as follows. Involved in chloramphenicol biosynthesis. Catalyzes the biosynthesis of 4-amino-4-deoxychorismate (ADC) from chorismate and glutamine. The polypeptide is Aminodeoxychorismate synthase (Streptomyces venezuelae (strain ATCC 10712 / CBS 650.69 / DSM 40230 / JCM 4526 / NBRC 13096 / PD 04745)).